The following is an 892-amino-acid chain: Alanine--tRNA ligase (892 aa).

Zn(2+)-binding residues include His-596, His-600, Cys-700, and His-704.

This sequence belongs to the class-II aminoacyl-tRNA synthetase family. It depends on Zn(2+) as a cofactor.

The protein localises to the cytoplasm. It carries out the reaction tRNA(Ala) + L-alanine + ATP = L-alanyl-tRNA(Ala) + AMP + diphosphate. Catalyzes the attachment of alanine to tRNA(Ala) in a two-step reaction: alanine is first activated by ATP to form Ala-AMP and then transferred to the acceptor end of tRNA(Ala). Also edits incorrectly charged Ser-tRNA(Ala) and Gly-tRNA(Ala) via its editing domain. This Methanococcus maripaludis (strain DSM 14266 / JCM 13030 / NBRC 101832 / S2 / LL) protein is Alanine--tRNA ligase.